Consider the following 287-residue polypeptide: Small ribosomal subunit biogenesis GTPase RsgA (287 aa).

One can recognise a CP-type G domain in the interval 63-223; the sequence is KNLLIRPKVA…VIDTPGFGSL (161 aa). GTP is bound by residues 113–116 and 166–174; these read SKMD and GQSGVGKST. 4 residues coordinate Zn(2+): Cys-246, Cys-251, His-253, and Cys-259.

It belongs to the TRAFAC class YlqF/YawG GTPase family. RsgA subfamily. As to quaternary structure, monomer. Associates with 30S ribosomal subunit, binds 16S rRNA. Requires Zn(2+) as cofactor.

The protein localises to the cytoplasm. Its function is as follows. One of several proteins that assist in the late maturation steps of the functional core of the 30S ribosomal subunit. Helps release RbfA from mature subunits. May play a role in the assembly of ribosomal proteins into the subunit. Circularly permuted GTPase that catalyzes slow GTP hydrolysis, GTPase activity is stimulated by the 30S ribosomal subunit. This chain is Small ribosomal subunit biogenesis GTPase RsgA, found in Malacoplasma penetrans (strain HF-2) (Mycoplasma penetrans).